Reading from the N-terminus, the 453-residue chain is Tyrosine-protein phosphatase non-receptor type 18 (453 aa).

The 266-residue stretch at 26–291 (LAREFSDIKA…RFLYHTVAQL (266 aa)) folds into the Tyrosine-protein phosphatase domain. Residues aspartate 197, 229-235 (CSAGCGR), and glutamine 276 contribute to the substrate site. Cysteine 229 serves as the catalytic Phosphocysteine intermediate. A phosphotyrosine mark is found at tyrosine 381 and tyrosine 419. The tract at residues 384 to 453 (VAPRAQRPVA…RDPPAEWTRV (70 aa)) is disordered. Over residues 442–453 (GPRDPPAEWTRV) the composition is skewed to basic and acidic residues.

This sequence belongs to the protein-tyrosine phosphatase family. Non-receptor class 4 subfamily. As to quaternary structure, interacts with PSTPIP1. As to expression, highest expression in bone marrow. Also expressed in kidney, lung, ovary, spleen, thymus and lymph node.

Its subcellular location is the nucleus. It localises to the cytoplasm. It carries out the reaction O-phospho-L-tyrosyl-[protein] + H2O = L-tyrosyl-[protein] + phosphate. Its function is as follows. May be involved in growth and differentiation of hematopoietic cells. This chain is Tyrosine-protein phosphatase non-receptor type 18 (Ptpn18), found in Mus musculus (Mouse).